We begin with the raw amino-acid sequence, 50 residues long: Photosystem II reaction center protein M (50 aa).

Residues 7–27 (GFVASLLFVGIPTIFLIGLFI) form a helical membrane-spanning segment.

This sequence belongs to the PsbM family. As to quaternary structure, PSII is composed of 1 copy each of membrane proteins PsbA, PsbB, PsbC, PsbD, PsbE, PsbF, PsbH, PsbI, PsbJ, PsbK, PsbL, PsbM, PsbT, PsbX, PsbY, Psb30/Ycf12, peripheral proteins PsbO, CyanoQ (PsbQ), PsbU, PsbV and a large number of cofactors. It forms dimeric complexes.

It localises to the cellular thylakoid membrane. Its function is as follows. One of the components of the core complex of photosystem II (PSII). PSII is a light-driven water:plastoquinone oxidoreductase that uses light energy to abstract electrons from H(2)O, generating O(2) and a proton gradient subsequently used for ATP formation. It consists of a core antenna complex that captures photons, and an electron transfer chain that converts photonic excitation into a charge separation. This subunit is found at the monomer-monomer interface. The polypeptide is Photosystem II reaction center protein M (Prochlorococcus marinus subsp. pastoris (strain CCMP1986 / NIES-2087 / MED4)).